A 253-amino-acid chain; its full sequence is uncharacterized protein (253 aa).

6 helical membrane passes run 17–37 (MWLLVWICGIIFLLGTGHIIA), 46–66 (IFGFFVAVAFFLLFLSPVFVF), 93–113 (LAASLLYQFVIQLALTAYGIW), 139–159 (MYGLISSLDMSVTVIVFWTVF), 172–192 (AMVLLVAMWLFFDEYIISPLV), and 222–242 (IHLSVLGFPIAIVITFLLLIM).

Its subcellular location is the cell membrane. This is an uncharacterized protein from Bacillus subtilis (strain 168).